The following is a 111-amino-acid chain: Movement protein TGB2 (111 aa).

The Cytoplasmic portion of the chain corresponds to 1–16; that stretch reads MSSHQNFLTPPPDHSK. Residues 17 to 37 form a helical membrane-spanning segment; that stretch reads AILAVAVGVGLAIVLHFSLSY. Over 38–72 the chain is Lumenal; that stretch reads KLPSPGDNIHSLPFGGTYRDGTKSIIYNSPHRGPG. A helical transmembrane segment spans residues 73 to 93; the sequence is QSGALPIITVFAIIECTLHVL. At 94–111 the chain is on the cytoplasmic side; it reads RKRDNPVRPQHSDCPNCS.

This sequence belongs to the Tymovirales TGBp2 protein family.

The protein localises to the host endoplasmic reticulum membrane. Functionally, plays a role in viral cell-to-cell propagation, by facilitating genome transport to neighboring plant cells through plasmosdesmata,. This chain is Movement protein TGB2, found in Carica papaya (Papaya).